Consider the following 432-residue polypeptide: 3-chlorobenzoate-3,4-dioxygenase oxygenase subunit (432 aa).

Positions 27 to 133 (WIPALKSTEL…VKEMAGVVWV (107 aa)) constitute a Rieske domain. 4 residues coordinate [2Fe-2S] cluster: Cys69, His71, Cys88, and His91. Fe cation contacts are provided by His180 and His185.

It belongs to the bacterial ring-hydroxylating dioxygenase alpha subunit family. As to quaternary structure, this dioxygenase system consists of two proteins: an oxygenase and an oxygenase reductase. It depends on [2Fe-2S] cluster as a cofactor. The cofactor is Fe cation.

This Comamonas testosteroni (Pseudomonas testosteroni) protein is 3-chlorobenzoate-3,4-dioxygenase oxygenase subunit (cbaA).